The following is a 285-amino-acid chain: Pantothenate synthetase (285 aa).

ATP is bound at residue 30-37; that stretch reads MGFLHEGH. Catalysis depends on histidine 37, which acts as the Proton donor. Glutamine 61 is a binding site for (R)-pantoate. Residue glutamine 61 participates in beta-alanine binding. An ATP-binding site is contributed by 147-150; the sequence is GQKD. Position 153 (glutamine 153) interacts with (R)-pantoate. ATP contacts are provided by residues valine 176 and 184-187; that span reads KSSR.

The protein belongs to the pantothenate synthetase family. Homodimer.

It localises to the cytoplasm. The catalysed reaction is (R)-pantoate + beta-alanine + ATP = (R)-pantothenate + AMP + diphosphate + H(+). Its pathway is cofactor biosynthesis; (R)-pantothenate biosynthesis; (R)-pantothenate from (R)-pantoate and beta-alanine: step 1/1. Functionally, catalyzes the condensation of pantoate with beta-alanine in an ATP-dependent reaction via a pantoyl-adenylate intermediate. This chain is Pantothenate synthetase, found in Listeria innocua serovar 6a (strain ATCC BAA-680 / CLIP 11262).